The chain runs to 121 residues: UPF0738 protein BPUM_1088 (121 aa).

This sequence belongs to the UPF0738 family.

The chain is UPF0738 protein BPUM_1088 from Bacillus pumilus (strain SAFR-032).